A 401-amino-acid polypeptide reads, in one-letter code: MTNRIVLAYSGGLDTTVAIPYLKKMIDGEVIAVSLDLGQGGENMDNVRQRALDAGAAESIVVDAKDEFAEEYCLPTIKANGMYMKQYPLVSAISRPLIVKHLVEAGKQFNGTHVAHGCTGKGNDQVRFEVGFMDTDPNLEIIAPARDFAWTRDKAIAFAEENNVPIEQSVKSPFSIDQNVWGRAIETGYLEDLWNAPTKDIYAYTEDPALGNAPDEVIISFEGGKPVSIDGRPVSVLQAIEELNRRAGAQGVGRLDMVEDRLVGIKSREIYEAPGAIALIKAHEALEDVTIERELARYKRGVDARWAEEVYDGLWFGPLKRSLDAFIDSTQEHVTGDIRMVLHAGSITINGRRSSHSLYDFNLATYDTGDTFDQTLAKGFVQLHGLSSKIANKRDREAGNN.

8–16 (AYSGGLDTT) serves as a coordination point for ATP. Residue tyrosine 87 participates in L-citrulline binding. Position 117 (glycine 117) interacts with ATP. L-aspartate is bound by residues threonine 119, asparagine 123, and aspartate 124. Asparagine 123 contributes to the L-citrulline binding site. L-citrulline-binding residues include arginine 127, serine 175, glutamate 259, and tyrosine 271.

It belongs to the argininosuccinate synthase family. Type 1 subfamily. As to quaternary structure, homotetramer.

Its subcellular location is the cytoplasm. It carries out the reaction L-citrulline + L-aspartate + ATP = 2-(N(omega)-L-arginino)succinate + AMP + diphosphate + H(+). Its pathway is amino-acid biosynthesis; L-arginine biosynthesis; L-arginine from L-ornithine and carbamoyl phosphate: step 2/3. This chain is Argininosuccinate synthase, found in Corynebacterium glutamicum (strain ATCC 13032 / DSM 20300 / JCM 1318 / BCRC 11384 / CCUG 27702 / LMG 3730 / NBRC 12168 / NCIMB 10025 / NRRL B-2784 / 534).